The primary structure comprises 2090 residues: MDGECLANEQMCVGRQITNATHASTAVIEDMWTPYKHLYNTFQTAVSNRSGFTSDLEQCLKKYKHNFSNLLRNPPRSEKSRNLLRNALNEGVPMQGHSRKTKMSQDLADEAVILSDMFDLDEGFAVELLCTAQRQQKHHPGLSRGLVAVLLYYDGRKAISCTLRDMFQVVSGVSWNTELPKEITGLVTNYAESLVDGSGILGRLLQLLEEMDVDKECAMLTTNRAFGSKKHQNQVLGLYEDIQQALAMALFNWSAQRGLPRHIAIRLMHQLANRKNHDAGGNMDDVTLIMLMALLYAYDTSMLLVTEEPNEHTTRLPIFSDREFAECFLEELYAQSSWQAPRLNAIIAYSFGLTLASLRHAPLQLQATAISIINRDEMLIDEALGAQVFVFFHSLLLEKDLVYSTQFFYRRVHLLITDFIDFMNSKVSELRGRADESSHTIISFLNEGLEPPPNLDSNFELLMLCVAKMHGDPRVTIRLCNEYWGPGDPNGSTAFKNTSRSVSLFKFISLASDLLPQTLFKAYLKMISGLTRTDFSARCAFNMLRVPQMATGGKYAVSWDHFFTTLGNYYTSMRNDFNTNIGMSGETIYRTRSTPKAITQREAEHLVAVMGIIQAVAEHDEVSRIMICDHPNWQTPQVLLGLVACATPLFLKAEILHTLAALAKSKETARVIWFHLEASQIIPTVPVSRSYAQCSLLEEMEQIESRSEQYNLTRGILQLLYTLMTTNLPKSLGAGQRTPAYEGYLKSMINSVLLKFYNRAYKVPSEKWQVGAQCLKLLYYLLATYRPSAMDFLETVDEPPYPGFHVMMQLQLKSEMLQLLLCIVEEVRERLDNYNRFQGKKLLEECSLYALLILEAALAKQNAFFEAHSAANCPILLSGLNRMLLDLNPRSRKPDHVLNIIKYVTYNSWLPRHALAAIKILASVTQLPNVSTQILSMYGQGSNEKLEIRQGFVECLEMEVCVGKHDDDLLDQLALNNHVPYLGFGDDLDNEREMSGEREYSTIESQLELQAGDGALESKPASIELQLKEAIIKLFEMNLSQQLPNFVYFLLGVDVLREFMANGRQHLAIEMQSSCVNSVVLLLEKYMDKQRHSDKYCEHTARIVERIYHLFHGLCANRRTAETILRYFRLTCSDFLLRHLRSLPFRQHREDHVLHAMGHLLNCVSIDVKLAAKHGQMTRFNQMCDILLIGNGMERSSHGLSMELGHSLISQPSSSFLAMDVLPAGGSISAVAHGAGSASLGAPNTGVKSLKPSLLQETSQGLHVTRLLDILVLEAGTLSQPQLEFFDGHLITQLLRDCEASAEAGANSRANLINVRKLYYILTDELYMVQSIIASGQRKAISTEIMLLLNHAVNINRVRTQRCATLAFMAAWGQLVQVLFSNMPDAVLPATQRRQHIIDIVEKVLIKVQPIQPIIEISVQVSETVLLLLANLRYCCYQAEDQSPEDLAAEDSLSNGNGNAIGNDSQVNALCLGQRAIGTGSDGGSGGGRDIGSGGNSSNLRFILKNLVQWIMISEVKSQKLRINLYSSLLNCLRIAKRLRTDEHLEYQETLISRQESARTYNKEQRRDDRLRLKAMAAEVIGTFGEKLIDTICHDAVTGHDVCRMLALACLDMISELQAVSTLCDFVASRGYLKHILESLDQSSTALCGILQPVPDHLRPLYVYESRMAFLTRMANSNVGARLLLTEQALGVLSNMKVYDQQPDLKSSELNRNEPQTFLPSIDDRFRSILLPALSLCDAIVNSLGPRNNSAAVQVLNFLFAHIDMVEAMLRSATPYMDLGHLQQVAVISNLFARASTHELTALEDSVQLDLRNRLGRVQQLMIVVFGRFCVSEPTIRRMLQQDEEQQTNPTDDSKRLRVKYFLDIAANVSLYCRNVVTSHSKDSMTSKYLLTTVINDVTLLTGKMSSKKLTTIMHTILNQLKGSIGYYLSQKSIADNLLQQRASLPNISFGPNGKQSYIELSQRYNEKRSELRQAVFIAEQNLYLLWIHLDFYLRNTIDYANENRNAINESNMDDDNDMSVLNASQEEIVQLKQLLISTFNETFCTQLINASEDYSIKCKGFNGSLLRRIKALVQFAPITANDVNSSFDS.

This sequence belongs to the NUP186/NUP192/NUP205 family. Part of the nuclear pore complex (NPC).

It localises to the nucleus. It is found in the nuclear pore complex. Plays a role in the nuclear pore complex (NPC) assembly and maintenance, but with limited role in NPC permeability. Required for specific nuclear import pathways such as Mad import. This chain is Nuclear pore complex protein Nup205, found in Drosophila melanogaster (Fruit fly).